The following is a 335-amino-acid chain: Glycerol-3-phosphate dehydrogenase [NAD(P)+] (335 aa).

Residues S10, F11, R31, and K105 each contribute to the NADPH site. Residues K105, G136, and S138 each contribute to the sn-glycerol 3-phosphate site. A140 is an NADPH binding site. Sn-glycerol 3-phosphate is bound by residues K191, D244, S254, R255, and N256. Catalysis depends on K191, which acts as the Proton acceptor. R255 contacts NADPH. Residues V279 and E281 each contribute to the NADPH site.

It belongs to the NAD-dependent glycerol-3-phosphate dehydrogenase family.

It localises to the cytoplasm. It carries out the reaction sn-glycerol 3-phosphate + NAD(+) = dihydroxyacetone phosphate + NADH + H(+). The enzyme catalyses sn-glycerol 3-phosphate + NADP(+) = dihydroxyacetone phosphate + NADPH + H(+). The protein operates within membrane lipid metabolism; glycerophospholipid metabolism. Its function is as follows. Catalyzes the reduction of the glycolytic intermediate dihydroxyacetone phosphate (DHAP) to sn-glycerol 3-phosphate (G3P), the key precursor for phospholipid synthesis. This chain is Glycerol-3-phosphate dehydrogenase [NAD(P)+], found in Myxococcus xanthus (strain DK1622).